The chain runs to 321 residues: Beta-ketoacyl-[acyl-carrier-protein] synthase III (321 aa).

Catalysis depends on residues C115 and H248. Positions 249-253 (QANIR) are ACP-binding. N278 is an active-site residue.

This sequence belongs to the thiolase-like superfamily. FabH family. As to quaternary structure, homodimer.

It localises to the cytoplasm. The catalysed reaction is malonyl-[ACP] + acetyl-CoA + H(+) = 3-oxobutanoyl-[ACP] + CO2 + CoA. The protein operates within lipid metabolism; fatty acid biosynthesis. In terms of biological role, catalyzes the condensation reaction of fatty acid synthesis by the addition to an acyl acceptor of two carbons from malonyl-ACP. Catalyzes the first condensation reaction which initiates fatty acid synthesis and may therefore play a role in governing the total rate of fatty acid production. Possesses both acetoacetyl-ACP synthase and acetyl transacylase activities. Its substrate specificity determines the biosynthesis of branched-chain and/or straight-chain of fatty acids. This chain is Beta-ketoacyl-[acyl-carrier-protein] synthase III, found in Azoarcus sp. (strain BH72).